Reading from the N-terminus, the 491-residue chain is UDP-N-acetylmuramate--L-alanine ligase (491 aa).

126–132 (GTHGKTT) contributes to the ATP binding site.

It belongs to the MurCDEF family.

Its subcellular location is the cytoplasm. It catalyses the reaction UDP-N-acetyl-alpha-D-muramate + L-alanine + ATP = UDP-N-acetyl-alpha-D-muramoyl-L-alanine + ADP + phosphate + H(+). Its pathway is cell wall biogenesis; peptidoglycan biosynthesis. Cell wall formation. This is UDP-N-acetylmuramate--L-alanine ligase from Escherichia coli (strain SMS-3-5 / SECEC).